The following is a 119-amino-acid chain: Large ribosomal subunit protein bL20 (119 aa).

This sequence belongs to the bacterial ribosomal protein bL20 family.

Binds directly to 23S ribosomal RNA and is necessary for the in vitro assembly process of the 50S ribosomal subunit. It is not involved in the protein synthesizing functions of that subunit. This chain is Large ribosomal subunit protein bL20, found in Jannaschia sp. (strain CCS1).